We begin with the raw amino-acid sequence, 360 residues long: Catabolic L-serine/threonine dehydratase (360 aa).

N-acetylserine is present on Ser2. Lys37 is modified (N6-(pyridoxal phosphate)lysine).

It belongs to the serine/threonine dehydratase family. It depends on pyridoxal 5'-phosphate as a cofactor.

The protein resides in the mitochondrion. The catalysed reaction is L-serine = pyruvate + NH4(+). The enzyme catalyses L-threonine = 2-oxobutanoate + NH4(+). This chain is Catabolic L-serine/threonine dehydratase (CHA1), found in Saccharomyces cerevisiae (strain ATCC 204508 / S288c) (Baker's yeast).